We begin with the raw amino-acid sequence, 430 residues long: MKQAFRVALGFLVLWASVLHAEVRIEITQGVDSARPIGVVPFKWMGPGTPPEEIGAIVGADLRNSGKFNPIDAARMPQQPSTAAEVTPAAWTALGIDAVVVGQVQPSADGSYVVSYQLVDTSGAAGSVLAQNQYKVTKQWLRYAAHTASDEVFEKLTGIKGAFRTRIAYVVQTNGGKFPHELRVSDYDGYNQFVVHRSPEPLMSPAWSPDGSKIAYVTFESGKSALVIQTLANGAIRQVASFPRHNGAPAFSPDGTKLAFALSKSGSLNLYVMDLGSGQISQVTDGRSNNTEPSWFPDSQNLAYTSDQGGRPQVYKVNINGGAPQRITWEGSQNQNADVSPDGKFLVLVSSNGGAQHIAKQDLVTGAVQVLTDTFLDETPSIAPNGTMVIYSSTQGLGAVLQLVSTDGRFKARLPATDGQVKFPAWSPYL.

A signal peptide spans 1-21; sequence MKQAFRVALGFLVLWASVLHA.

The protein belongs to the TolB family. As to quaternary structure, the Tol-Pal system is composed of five core proteins: the inner membrane proteins TolA, TolQ and TolR, the periplasmic protein TolB and the outer membrane protein Pal. They form a network linking the inner and outer membranes and the peptidoglycan layer.

It is found in the periplasm. Its function is as follows. Part of the Tol-Pal system, which plays a role in outer membrane invagination during cell division and is important for maintaining outer membrane integrity. TolB occupies a key intermediary position in the Tol-Pal system because it communicates directly with both membrane-embedded components, Pal in the outer membrane and TolA in the inner membrane. The chain is Tol-Pal system protein TolB from Yersinia enterocolitica serotype O:8 / biotype 1B (strain NCTC 13174 / 8081).